We begin with the raw amino-acid sequence, 720 residues long: Biotin biosynthesis bifunctional protein BioWF (720 aa).

A disordered region spans residues M1–S39. Residues R8–S23 are compositionally biased toward low complexity. Positions S24–S39 are enriched in basic and acidic residues. Position 314 (R314) interacts with substrate. Position 401–402 (G401–Y402) interacts with pyridoxal 5'-phosphate. H439 contacts substrate. Pyridoxal 5'-phosphate contacts are provided by residues S488, D513–H516, and T564–K567. Position 567 is an N6-(pyridoxal phosphate)lysine (K567). T684 contributes to the substrate binding site.

In the N-terminal section; belongs to the BioW family. It in the C-terminal section; belongs to the class-II pyridoxal-phosphate-dependent aminotransferase family. BioF subfamily. Homodimer. Mg(2+) serves as cofactor. Requires pyridoxal 5'-phosphate as cofactor.

The enzyme catalyses heptanedioate + ATP + CoA = 6-carboxyhexanoyl-CoA + AMP + diphosphate. It carries out the reaction 6-carboxyhexanoyl-[ACP] + L-alanine + H(+) = (8S)-8-amino-7-oxononanoate + holo-[ACP] + CO2. Its pathway is metabolic intermediate metabolism; pimeloyl-CoA biosynthesis; pimeloyl-CoA from pimelate: step 1/1. It participates in cofactor biosynthesis; biotin biosynthesis. Catalyzes both the decarboxylative condensation of pimeloyl-[acyl-carrier protein] and L-alanine to produce 8-amino-7-oxononanoate (AON), [acyl-carrier protein], and carbon dioxide, and the transformation of pimelate into pimeloyl-CoA with concomitant hydrolysis of ATP to AMP. In Corynebacterium kroppenstedtii (strain DSM 44385 / JCM 11950 / CIP 105744 / CCUG 35717), this protein is Biotin biosynthesis bifunctional protein BioWF (bioWF).